We begin with the raw amino-acid sequence, 735 residues long: MSRRNPPGSRNGGGPTNASPFIKRDRMRRNFLRMRMGQNGSNSSSPGVPNGDNSRGSLVKKDDPEYAEEREKMLLQIGVEADAGRSNVKVKDEDPNEYNEFPLRAIPKEDLENMRTHLLKFQSKKKINPVTDFHLPVRLHRKDTRNLQFQLTRAEIVQRQKEISEYKKKAEQERSTPNSGGMNKSGTVSLNNTVKDGSQTPTVDSVTKDNTANGVNSSIPTVTGSSVPPASPTTVSAVESNGLSNGSTSAANGLDGNASTANLANGRPLVTKLEDAGPAEDPTKVGMVKYDGKEVTNEPEFEEGTMDPLADVAPDGGGRAKRGNLRRKTRQLKVLDENAKKLRFEEFYPWVMEDFDGYNTWVGSYEAGNSDSYVLLSVEDDGSFTMIPADKVYKFTARNKYATLTIDEAEKRMDKKSGEVPRWLMKHLDNIGTTTTRYDRTRRKLKAVADQQAMDEDDRDDNSEVELDYDEEFADDEEAPIIDGNEQENKESEQRIKKEMLQANAMGLRDEEAPSENEEDELFGEKKIDEDGERIKKALQKTELAALYSSDENEINPYLSESDIENKENESPVKKEEDSDTLSKSKRSSPKKQQKKATNAHVHKEPTLRVKSIKNCVIILKGDKKILKSFPEGEWNPQTTKAVDSSNNASNTVPSPIKQEEGLNSTVAEREETPAPTITEKDIIEAIGDGKVNIKEFGKFIRRKYPGAENKKLMFAIVKKLCRKVGNDHMELKKE.

6 disordered regions span residues 1–68 (MSRR…EYAE), 165–263 (EYKK…TANL), 297–323 (NEPEFEEGTMDPLADVAPDGGGRAKRG), 446–465 (KAVADQQAMDEDDRDDNSEV), 471–606 (EEFA…HKEP), and 631–674 (PEGE…EETP). Low complexity predominate over residues 33 to 54 (RMRMGQNGSNSSSPGVPNGDNS). Basic and acidic residues-rich tracts occupy residues 59-68 (VKKDDPEYAE) and 165-174 (EYKKKAEQER). A compositionally biased stretch (polar residues) spans 175–219 (STPNSGGMNKSGTVSLNNTVKDGSQTPTVDSVTKDNTANGVNSSI). A Phosphoserine modification is found at serine 198. Threonine 200 is subject to Phosphothreonine. Low complexity predominate over residues 220 to 238 (PTVTGSSVPPASPTTVSAV). Over residues 239 to 263 (ESNGLSNGSTSAANGLDGNASTANL) the composition is skewed to polar residues. Composition is skewed to acidic residues over residues 453 to 465 (AMDEDDRDDNSEV) and 471 to 480 (EEFADDEEAP). The span at 487–500 (QENKESEQRIKKEM) shows a compositional bias: basic and acidic residues. Acidic residues predominate over residues 513 to 522 (APSENEEDEL). Phosphoserine is present on serine 515. Residues 523-536 (FGEKKIDEDGERIK) are compositionally biased toward basic and acidic residues. Residues serine 560, serine 562, and serine 571 each carry the phosphoserine modification. Over residues 564–583 (IENKENESPVKKEEDSDTLS) the composition is skewed to basic and acidic residues. A compositionally biased stretch (basic residues) spans 584–595 (KSKRSSPKKQQK). Polar residues predominate over residues 636–654 (NPQTTKAVDSSNNASNTVP). Serine 655 carries the post-translational modification Phosphoserine.

Belongs to the TFIIF alpha subunit family. TFIIF is composed of three different subunits: TFG1/RAP74, TFG2/RAP30 and TAF14. Phosphorylated on Ser and other residues by TAF1 and casein kinase II-like kinases.

It is found in the nucleus. Its function is as follows. TFIIF is a general transcription initiation factor that binds to RNA polymerase II. Its functions include the recruitment of RNA polymerase II to the promoter bound DNA-TBP-TFIIB complex, decreasing the affinity of RNA polymerase II for non-specific DNA, allowing for the subsequent recruitment of TFIIE and TFIIH, and facilitating RNA polymerase II elongation. This chain is Transcription initiation factor IIF subunit alpha (TFG1), found in Saccharomyces cerevisiae (strain ATCC 204508 / S288c) (Baker's yeast).